A 487-amino-acid polypeptide reads, in one-letter code: Protein DETOXIFICATION 11 (487 aa).

The next 12 membrane-spanning stretches (helical) occupy residues 35-55, 73-93, 122-142, 151-171, 184-204, 211-231, 264-284, 293-313, 330-350, 377-397, 412-432, and 435-455; these read LICF…LQII, FAIS…SCAL, LVCL…VILG, AGRF…LQPL, LLIT…LLVY, IGGA…LGSF, AAML…SGLL, VLSV…AIAA, AAHI…LMVG, MAPL…LSGV, FGAF…WVHL, and VGLW…LALV.

This sequence belongs to the multi antimicrobial extrusion (MATE) (TC 2.A.66.1) family.

It is found in the membrane. This chain is Protein DETOXIFICATION 11, found in Arabidopsis thaliana (Mouse-ear cress).